The sequence spans 128 residues: Ribonuclease P protein component (128 aa).

It belongs to the RnpA family. In terms of assembly, consists of a catalytic RNA component (M1 or rnpB) and a protein subunit.

The catalysed reaction is Endonucleolytic cleavage of RNA, removing 5'-extranucleotides from tRNA precursor.. RNaseP catalyzes the removal of the 5'-leader sequence from pre-tRNA to produce the mature 5'-terminus. It can also cleave other RNA substrates such as 4.5S RNA. The protein component plays an auxiliary but essential role in vivo by binding to the 5'-leader sequence and broadening the substrate specificity of the ribozyme. In Rhizobium meliloti (strain 1021) (Ensifer meliloti), this protein is Ribonuclease P protein component.